Reading from the N-terminus, the 794-residue chain is FT-interacting protein 1 (794 aa).

The segment covering 1–27 (MAAKDGAKSQEDYKLKDMKPELGERWP) has biased composition (basic and acidic residues). The tract at residues 1-34 (MAAKDGAKSQEDYKLKDMKPELGERWPHGGQRGG) is disordered. C2 domains lie at 37–158 (WIGS…PQWY), 198–321 (VQGE…SKWY), and 364–492 (YISD…THSY). Residues Asp-76, Asp-123, Glu-125, and Glu-131 each contribute to the Ca(2+) site. 4 helical membrane-spanning segments follow: residues 510–532 (LAVRFTCLSLAHMIYLYGHPLLP), 595–615 (IVSVFAGLIAMSKWLGDVCYW), 619–639 (LTTILFHVLFFILICYPELIL), and 737–757 (LFVIFCLVAAMILYVTPFKII).

This sequence belongs to the MCTP family. In terms of assembly, interacts with FT in phloem companion cells. It depends on Ca(2+) as a cofactor. As to expression, expressed in the vascular tissues of roots, cotyledons and rosette leaves. Specifically located in the phloem including companion cells. Observed in flowers. Not detected in the shoot apical meristem.

The protein resides in the endoplasmic reticulum membrane. It localises to the cell junction. Its subcellular location is the plasmodesma. Involved in the export of FT from the phloem companion cells to the sieve elements through the plasmodesmata. Regulates flowering time under long days. May function as a signaling molecule by regulating the trafficking of other regulators. The protein is FT-interacting protein 1 of Arabidopsis thaliana (Mouse-ear cress).